The sequence spans 194 residues: RNA polymerase II subunit A C-terminal domain phosphatase SSU72 like protein 5 (194 aa).

Belongs to the SSU72 phosphatase family.

Its subcellular location is the nucleus. The catalysed reaction is O-phospho-L-seryl-[protein] + H2O = L-seryl-[protein] + phosphate. The enzyme catalyses O-phospho-L-threonyl-[protein] + H2O = L-threonyl-[protein] + phosphate. In terms of biological role, protein phosphatase that catalyzes the dephosphorylation of the C-terminal domain of RNA polymerase II. Plays a role in RNA processing and termination. The sequence is that of RNA polymerase II subunit A C-terminal domain phosphatase SSU72 like protein 5 from Homo sapiens (Human).